A 292-amino-acid chain; its full sequence is Zinc finger protein SNAI3 (292 aa).

The tract at residues 1–20 is SNAG domain; it reads MPRSFLVKTHSSHRVPNYRR. 4 consecutive C2H2-type zinc fingers follow at residues 152-174, 183-205, 209-231, and 237-259; these read FECFHCHKPYHTLAGLARHRQLH, FTCKYCDKEYTSLGALKMHIRTH, CTCKICGKAFSRPWLLQGHVRTH, and YACSHCSRAFADRSNLRAHLQTH. The segment at 265–287 adopts a C2H2-type 5; degenerate zinc-finger fold; it reads YRCRRCTKTFSRMSLLARHEESG.

This sequence belongs to the snail C2H2-type zinc-finger protein family.

Its subcellular location is the nucleus. Functionally, seems to inhibit myoblast differentiation. Transcriptional repressor of E-box-dependent transactivation of downstream myogenic bHLHs genes. Binds preferentially to the canonical E-box sequences 5'-CAGGTG-3' and 5'-CACCTG-3'. The sequence is that of Zinc finger protein SNAI3 (SNAI3) from Homo sapiens (Human).